A 273-amino-acid polypeptide reads, in one-letter code: Multivesicular body subunit 12A (273 aa).

An MABP domain is found at 9-151 (GMPLAGLAWS…GFAIWCRKAK (143 aa)). Thr-130 bears the Phosphothreonine mark. Positions 154–186 (RPVPKPRALSRDVRDLSLDSPGQPSKGGFPERT) are disordered. Residues 155 to 160 (PVPKPR) carry the SH3-binding motif. Ser-163, Ser-170, Ser-195, and Ser-202 each carry phosphoserine. Positions 192-273 (SRASTLRRND…AAARLPPSVS (82 aa)) are interaction with TSG101, VPS37B and VPS28. Tyr-204 is subject to Phosphotyrosine. Ser-207 is subject to Phosphoserine. The UMA domain maps to 215-265 (MDGVPFTLHPRFEGKSCGPLAFSAFADLTIKSLADIEAEYNYGFVVEKTAA).

It belongs to the MVB12 family. As to quaternary structure, component of the ESCRT-I complex (endosomal sorting complex required for transport I) which consists of TSG101, VPS28, a VPS37 protein (VPS37A to -D) and MVB12A or MVB12B in a 1:1:1:1 stoichiometry. Interacts with CD2AP and CIN85/SH3KBP1. Interacts with CD2AP (via one of the SH3 domains). Interacts with TSG101; the association appears to be mediated by the TSG101-VPS37 binary subcomplex. Interacts with VPS28. Interacts with VPS37B; the association appears to be mediated by the TSG101-VPS37 binary subcomplex. Interacts with VPS37C; the association appears to be mediated by the TSG101-VPS37 binary subcomplex. Interacts with VPS37D; the association appears to be mediated by the TSG101-VPS37 binary subcomplex. Interacts with CEP55. In terms of processing, phosphorylated on Tyr-204 upon EGF stimulation. Phosphorylation is required for interaction with CD2AP and CIN85/SH3KBP1.

It is found in the cytoplasm. The protein localises to the cytoskeleton. It localises to the nucleus. Its subcellular location is the endosome. The protein resides in the microtubule organizing center. It is found in the centrosome. The protein localises to the late endosome membrane. Functionally, component of the ESCRT-I complex, a regulator of vesicular trafficking process. Required for the sorting of endocytic ubiquitinated cargos into multivesicular bodies. May be involved in the ligand-mediated internalization and down-regulation of EGF receptor. This is Multivesicular body subunit 12A (MVB12A) from Bos taurus (Bovine).